We begin with the raw amino-acid sequence, 276 residues long: Formamidopyrimidine-DNA glycosylase (276 aa).

Catalysis depends on P2, which acts as the Schiff-base intermediate with DNA. The active-site Proton donor is the E3. Catalysis depends on K58, which acts as the Proton donor; for beta-elimination activity. 3 residues coordinate DNA: H94, R112, and R157. The FPG-type zinc-finger motif lies at 242-276; it reads FVYDRAGQPCRVCGTPIKQIVQGQRSTYYCPTCQR. R266 serves as the catalytic Proton donor; for delta-elimination activity.

Belongs to the FPG family. As to quaternary structure, monomer. Zn(2+) is required as a cofactor.

The catalysed reaction is Hydrolysis of DNA containing ring-opened 7-methylguanine residues, releasing 2,6-diamino-4-hydroxy-5-(N-methyl)formamidopyrimidine.. The enzyme catalyses 2'-deoxyribonucleotide-(2'-deoxyribose 5'-phosphate)-2'-deoxyribonucleotide-DNA = a 3'-end 2'-deoxyribonucleotide-(2,3-dehydro-2,3-deoxyribose 5'-phosphate)-DNA + a 5'-end 5'-phospho-2'-deoxyribonucleoside-DNA + H(+). Involved in base excision repair of DNA damaged by oxidation or by mutagenic agents. Acts as a DNA glycosylase that recognizes and removes damaged bases. Has a preference for oxidized purines, such as 7,8-dihydro-8-oxoguanine (8-oxoG). Has AP (apurinic/apyrimidinic) lyase activity and introduces nicks in the DNA strand. Cleaves the DNA backbone by beta-delta elimination to generate a single-strand break at the site of the removed base with both 3'- and 5'-phosphates. The chain is Formamidopyrimidine-DNA glycosylase from Paraburkholderia phymatum (strain DSM 17167 / CIP 108236 / LMG 21445 / STM815) (Burkholderia phymatum).